Reading from the N-terminus, the 210-residue chain is Imidazole glycerol phosphate synthase subunit HisH (210 aa).

The 210-residue stretch at 1 to 210 (MIAILDYGMG…KLLENFIRFI (210 aa)) folds into the Glutamine amidotransferase type-1 domain. C79 functions as the Nucleophile in the catalytic mechanism. Catalysis depends on residues H191 and E193.

In terms of assembly, heterodimer of HisH and HisF.

The protein localises to the cytoplasm. The catalysed reaction is 5-[(5-phospho-1-deoxy-D-ribulos-1-ylimino)methylamino]-1-(5-phospho-beta-D-ribosyl)imidazole-4-carboxamide + L-glutamine = D-erythro-1-(imidazol-4-yl)glycerol 3-phosphate + 5-amino-1-(5-phospho-beta-D-ribosyl)imidazole-4-carboxamide + L-glutamate + H(+). It catalyses the reaction L-glutamine + H2O = L-glutamate + NH4(+). The protein operates within amino-acid biosynthesis; L-histidine biosynthesis; L-histidine from 5-phospho-alpha-D-ribose 1-diphosphate: step 5/9. In terms of biological role, IGPS catalyzes the conversion of PRFAR and glutamine to IGP, AICAR and glutamate. The HisH subunit catalyzes the hydrolysis of glutamine to glutamate and ammonia as part of the synthesis of IGP and AICAR. The resulting ammonia molecule is channeled to the active site of HisF. This is Imidazole glycerol phosphate synthase subunit HisH from Leptospira interrogans serogroup Icterohaemorrhagiae serovar copenhageni (strain Fiocruz L1-130).